A 494-amino-acid polypeptide reads, in one-letter code: Putative transporter SVOPL (494 aa).

Transmembrane regions (helical) follow at residues 48–68, 86–106, 121–141, 179–199, 203–223, 281–301, 350–370, 385–405, 431–451, and 460–480; these read IALF…IMLI, VAFV…LFGL, FLWG…IWFV, VFWL…IPTI, WLIR…KFIP, TLQI…VILA, IIST…INFL, LFFL…FLFM, AIGM…APFI, and FLGA…SAFT.

It belongs to the major facilitator superfamily.

It localises to the membrane. This Mus musculus (Mouse) protein is Putative transporter SVOPL (Svopl).